Consider the following 790-residue polypeptide: uncharacterized protein (790 aa).

The TBDR plug domain occupies 37-172 (APVPVPVNGN…NGGVIDAKIK (136 aa)). The TBDR beta-barrel domain occupies 178 to 790 (DSKVKLGYRT…TFWLDVSMKF (613 aa)).

It belongs to the TonB-dependent receptor family.

It is found in the cell outer membrane. This is an uncharacterized protein from Escherichia coli (strain K12).